The chain runs to 156 residues: Envelope glycoprotein L (156 aa).

The first 16 residues, 1 to 16 (MSPLVAVLVFFSAALG), serve as a signal peptide directing secretion. Residues 50–156 (ELEWDDEDHP…LRYNGGPPAE (107 aa)) enclose the gL alphaherpesvirus-type domain. A disulfide bond links Cys-71 and Cys-95.

The protein belongs to the herpesviridae glycoprotein L (gL) family. Alphaherpesvirinae gL subfamily. In terms of assembly, interacts with glycoprotein H (gH); this interaction is necessary for the correct processing and cell surface expression of gH. The heterodimer gH/gL seems to interact with gB trimers during fusion. In terms of processing, O-glycosylated, and sialylated.

The protein localises to the virion membrane. Its subcellular location is the host cell membrane. The protein resides in the host Golgi apparatus. It localises to the host trans-Golgi network. Functionally, the heterodimer glycoprotein H-glycoprotein L is required for the fusion of viral and plasma membranes leading to virus entry into the host cell. Acts as a functional inhibitor of gH and maintains gH in an inhibited form. Upon binding to host integrins, gL dissociates from gH leading to activation of the viral fusion glycoproteins gB and gH. This Suid herpesvirus 1 (strain Indiana-Funkhauser / Becker) (SuHV-1) protein is Envelope glycoprotein L.